A 617-amino-acid chain; its full sequence is mRNA export factor MEX67 (617 aa).

Gly residues predominate over residues 1-10 (MSYRGRGGGY). Residues 1–24 (MSYRGRGGGYNNNRGQFSSGPHQH) form a disordered region. 3 LRR repeats span residues 185–206 (DVDSIDLSNNELQDLQTLTSMA), 211–232 (KLQNLSLQNNNFTKIKVFETWR), and 237–258 (FLRELILFNNPIVQTNDPAEIQ). One can recognise an NTF2 domain in the interval 309–499 (LATNFIANYL…MIVASDTLLI (191 aa)). Disordered stretches follow at residues 442–469 (EVDGSASSAPSGPRGGSRYHSGPKHKRI) and 513–554 (LPSN…TTAD). Low complexity-rich tracts occupy residues 445–459 (GSASSAPSGPRGGSR) and 526–542 (ATSTPSPLPPTTITTPQ). A TAP-C domain is found at 565 to 617 (QIQQELLVKILLETKLNINYGIMLCEQSNWDYQQASVNFKNSAASLPSDAFVQ).

It belongs to the NXF family. In terms of assembly, interacts with nucleoporin complex protein MTR2.

It localises to the nucleus. Its subcellular location is the cytoplasm. Involved in the export of mRNA from the nucleus to the cytoplasm. This is mRNA export factor MEX67 from Candida albicans (strain SC5314 / ATCC MYA-2876) (Yeast).